We begin with the raw amino-acid sequence, 576 residues long: Colicin-E7 (576 aa).

Disordered regions lie at residues 1-75 (MSGG…GGGS), 421-478 (SSAL…PVPD), and 506-557 (DPEL…GVYD). Residues 19–35 (NINGGPTGLGGNGGASD) are compositionally biased toward gly residues. Positions 36–45 (GSGWSSENNP) are enriched in low complexity. Positions 46 to 75 (WGGGSGSGVHWGGGSGHGNGGGNSNSGGGS) are enriched in gly residues. 2 stretches are compositionally biased toward basic and acidic residues: residues 424–447 (LERRKQKENKEKDAKAKLDKESKR) and 535–548 (SGKRTSFELHHEKP). Positions 544, 569, and 573 each coordinate Zn(2+).

Belongs to the colicin/pyosin nuclease family.

Its function is as follows. This plasmid-coded bactericidal protein is an endonuclease active on both single- and double-stranded DNA but with undefined specificity. In terms of biological role, colicins are polypeptide toxins produced by and active against E.coli and closely related bacteria. The sequence is that of Colicin-E7 (colE7) from Escherichia coli.